The sequence spans 48 residues: Toxin CSTX-15 (48 aa).

4 cysteine pairs are disulfide-bonded: cysteine 3-cysteine 18, cysteine 10-cysteine 27, cysteine 17-cysteine 42, and cysteine 29-cysteine 40.

Belongs to the neurotoxin 19 (CSTX) family. 12 subfamily. As to quaternary structure, heterodimer of A and B chains; disulfide-linked. In terms of processing, contains 4 disulfide bonds. Expressed by the venom gland.

It localises to the secreted. This Cupiennius salei (American wandering spider) protein is Toxin CSTX-15.